The sequence spans 473 residues: Trigger factor (473 aa).

Residues 174 to 261 (GDIAVVSFKG…LKDLKEKELP (88 aa)) form the PPIase FKBP-type domain. The disordered stretch occupies residues 442–473 (ATKLTTKTTTKATTKKGVKTKSKPKVNKKEKN). Residues 444–453 (KLTTKTTTKA) are compositionally biased toward low complexity. The segment covering 454-467 (TTKKGVKTKSKPKV) has biased composition (basic residues).

This sequence belongs to the FKBP-type PPIase family. Tig subfamily.

It localises to the cytoplasm. The enzyme catalyses [protein]-peptidylproline (omega=180) = [protein]-peptidylproline (omega=0). Its function is as follows. Involved in protein export. Acts as a chaperone by maintaining the newly synthesized protein in an open conformation. Functions as a peptidyl-prolyl cis-trans isomerase. The polypeptide is Trigger factor (Prochlorococcus marinus subsp. pastoris (strain CCMP1986 / NIES-2087 / MED4)).